The chain runs to 360 residues: Dynein intermediate light chain dil1 (360 aa).

The protein belongs to the dynein light intermediate chain DYN3 family. The dynein complex consists of at least two heavy chains and a number of intermediate and light chains. Interacts with rga3, sec10, sec16, syp1, rvb2, spbc19c7.04c, spbc2f12.05 and spac3a11.10c. Post-translationally, the N-terminal part is acetylated.

The protein resides in the cytoplasm. Its subcellular location is the cytoskeleton. Its function is as follows. Component of the cytoplasmic dynein which acts as a motor for the intracellular retrograde motility of vesicles and organelles along microtubules. Promotes oscillatory nuclear movement and efficient pairing of homologous centromeres during meiotic prophase. The chain is Dynein intermediate light chain dil1 (dil1) from Schizosaccharomyces pombe (strain 972 / ATCC 24843) (Fission yeast).